The primary structure comprises 260 residues: Tropinone reductase 2 (260 aa).

Residue 18-41 (SRGIGYGIVEELASLGASVYTCSR) coordinates NADP(+). Ser146 contacts substrate. Tyr159 serves as the catalytic Proton acceptor. 192–196 (IATSL) is a binding site for NADP(+).

This sequence belongs to the short-chain dehydrogenases/reductases (SDR) family. Homodimer.

The catalysed reaction is pseudotropine + NADP(+) = tropinone + NADPH + H(+). The protein operates within alkaloid biosynthesis; tropane alkaloid biosynthesis. Catalyzes the stereospecific reduction of tropinone to pseudotropine. The chain is Tropinone reductase 2 (TR2) from Datura stramonium (Jimsonweed).